The following is a 2312-amino-acid chain: Protein Ycf2 (2312 aa).

ATP is bound at residue 1630 to 1637; the sequence is GSIGTGRS.

It belongs to the Ycf2 family.

Its subcellular location is the plastid. It localises to the chloroplast stroma. Its function is as follows. Probable ATPase of unknown function. Its presence in a non-photosynthetic plant (Epifagus virginiana) and experiments in tobacco indicate that it has an essential function which is probably not related to photosynthesis. This is Protein Ycf2 from Manihot esculenta (Cassava).